We begin with the raw amino-acid sequence, 722 residues long: Delta-like protein 1 (722 aa).

Residues 1 to 17 form the signal peptide; that stretch reads MGRRSALALAVVSALLC. Over 18 to 545 the chain is Extracellular; the sequence is QVWSSGVFEL…MESQGGPFPW (528 aa). The DSL domain occupies 176–220; it reads FVCDEHYYGEGCSVFCRPRDDAFGHFTCGDRGEKMCDPGWKGQYC. Disulfide bonds link Cys-178/Cys-187, Cys-191/Cys-203, Cys-211/Cys-220, Cys-225/Cys-236, Cys-229/Cys-242, Cys-244/Cys-253, Cys-256/Cys-267, Cys-262/Cys-273, Cys-275/Cys-284, Cys-291/Cys-303, Cys-297/Cys-313, Cys-315/Cys-324, Cys-331/Cys-342, Cys-336/Cys-351, Cys-353/Cys-362, Cys-369/Cys-380, Cys-374/Cys-390, Cys-392/Cys-401, Cys-408/Cys-419, Cys-413/Cys-428, Cys-430/Cys-439, Cys-446/Cys-457, Cys-451/Cys-466, Cys-468/Cys-477, Cys-484/Cys-495, Cys-489/Cys-504, and Cys-506/Cys-515. 3 consecutive EGF-like domains span residues 225 to 253, 256 to 284, and 291 to 324; these read CLPG…GRYC, CIRY…GLFC, and CTHH…GANC. Positions 331–362 constitute an EGF-like 4; calcium-binding domain; it reads CAPSPCKNGASCTDLEDSFSCTCPPGFYGKVC. EGF-like domains follow at residues 369-401 and 408-439; these read CADG…GFNC and CGSS…GRYC. The 32-residue stretch at 446–477 folds into the EGF-like 7; calcium-binding domain; it reads CASSPCANGGTCRDSVNDFSCTCPPGYTGKNC. The N-linked (GlcNAc...) asparagine glycan is linked to Asn-476. An EGF-like 8 domain is found at 484 to 515; that stretch reads CEHAPCHNGATCHQRGQRYMCECAQGYGGPNC. Residues 546-568 form a helical membrane-spanning segment; sequence VAVCAGVVLVLLLLLGCAAVVVC. The Cytoplasmic segment spans residues 569–722; it reads VRLKLQKHQP…KDECVIATEV (154 aa). Lys-613 is covalently cross-linked (Glycyl lysine isopeptide (Lys-Gly) (interchain with G-Cter in ubiquitin)). Thr-638 carries the post-translational modification Phosphothreonine. Residues 655-664 are compositionally biased toward basic and acidic residues; sequence RDTHSKRDTK. The segment at 655-697 is disordered; sequence RDTHSKRDTKCQSQSSAGEEKIAPTLRGGEIPDRKRPESVYST. Ser-693 is subject to Phosphoserine; by PKB. Phosphoserine is present on Ser-696. The tract at residues 719–722 is interaction with MAGI1; the sequence is ATEV.

In terms of assembly, homodimer. Interacts with TJP1. Interacts with MMP14; inhibits DLL1-induced Notch signaling. Interacts with MAGI1 (via PDZ domain); forms a complex with CTNNB1 and CDH2 and promotes recruitment to the adherens junction and stabilization on the cell surface. Interacts with PSEN1; undergoes a presenilin-dependent gamma-secretase cleavage that releases a Dll1-intracellular form. Interacts with MFAP5. Interacts with MIB1. Interacts with NEURL1B; leads to ubiquitination. Interacts with NEURL1. Interacts with SYNJ2BP; enhances DLL1 protein stability, and promotes Notch signaling in endothelial cells. Interacts with MAGI1, MAGI2, MAGI3 and MPDZ. Interacts (via ubiquitin) with EPN1 (via IUM domain); binding with NOTCH1 attached to neighboring cell, promotes ligand ubiquitination and EPN1 interaction, leading to NECD transendocytosis and Notch signaling. Interacts with NOTCH1. In terms of processing, ubiquitinated by MIB (MIB1 or MIB2), leading to its endocytosis and subsequent degradation. Ubiquitinated; promotes recycling back to the plasma membrane and confers a strong affinity for NOTCH1. Multi-ubiquitination of Lys-613 by MIB1 promotes both cis and trans-interaction with NOTCH1, as well as activation of Notch signaling. Ubiquitinated by NEURL1B. Phosphorylated in a membrane association-dependent manner. Phosphorylation at Ser-696 requires the presence of Ser-693, whereas phosphorylation at Thr-638 and Ser-693 occurs independently of the other sites. Phosphorylation is required for full ligand activity in vitro and affects surface presentation, ectodomain shedding, and endocytosis. Post-translationally, cleaved by MMP14; negatively regulates DLL1-induced Notch signaling in HPCs, modulating B-lymphocyte differentiation in bone marrow. Undergoes two consecutive processing events: a shedding event, partially by ADAM10, that generates a soluble extracellular form and an intracellular membrane-anchored form, followed by a gamma-secretase cleavage releasing an intracellular fragment. In terms of processing, O-fucosylated. Can be elongated to a disaccharide by MFNG. As to expression, in the embryo, expressed in the paraxial mesoderm and nervous system. Expressed at high levels in adult heart and at lower levels, in adult lung. Highly expressed in satellite cells from masseter and tongue than in satellite cells from leg and extraocular muscle.?.

It localises to the apical cell membrane. Its subcellular location is the cell junction. It is found in the adherens junction. The protein localises to the membrane raft. The protein resides in the cell membrane. It localises to the nucleus. Its function is as follows. Transmembrane ligand protein of NOTCH1, NOTCH2 and NOTCH3 receptors that binds the extracellular domain (ECD) of Notch receptor in a cis and trans fashion manner. Following transinteraction, ligand cells produce mechanical force that depends of a clathrin-mediated endocytosis, requiring ligand ubiquitination, EPN1 interaction, and actin polymerisation; these events promote Notch receptor extracellular domain (NECD) transendocytosis and triggers Notch signaling through induction of cleavage, hyperphosphorylation, and nuclear accumulation of the intracellular domain of Notch receptors (NICD). Is required for embryonic development and maintenance of adult stem cells in many different tissues and immune systeme; the DLL1-induced Notch signaling is mediated through an intercellular communication that regulates cell lineage, cell specification, cell patterning and morphogenesis through effects on differentiation and proliferation. Plays a role in brain development at different level, namely by regulating neuronal differentiation of neural precursor cells via cell-cell interaction, most likely through the lateral inhibitory system in an endogenous level dependent-manner. During neocortex development, Dll1-Notch signaling transmission is mediated by dynamic interactions between intermediate neurogenic progenitors and radial glia; the cell-cell interactions are mediated via dynamic and transient elongation processes, likely to reactivate/maintain Notch activity in neighboring progenitors, and coordinate progenitor cell division and differentiation across radial and zonal boundaries. During cerebellar development, regulates Bergmann glial monolayer formation and its morphological maturation through a Notch signaling pathway. At the retina and spinal cord level, regulates neurogenesis by preventing the premature differentiation of neural progenitors and also by maintaining progenitors in spinal cord through Notch signaling pathway. Also controls neurogenesis of the neural tube in a progenitor domain-specific fashion along the dorsoventral axis. Maintains quiescence of neural stem cells and plays a role as a fate determinant that segregates asymmetrically to one daughter cell during neural stem cells mitosis, resulting in neuronal differentiation in Dll1-inheriting cell. Plays a role in immune systeme development, namely the development of all T-cells and marginal zone (MZ) B cells. Blocks the differentiation of progenitor cells into the B-cell lineage while promoting the emergence of a population of cells with the characteristics of a T-cell/NK-cell precursor. Upon MMP14 cleavage, negatively regulates Notch signaling in haematopoietic progenitor cells to specifically maintain normal B-cell development in bone marrow. Also plays a role during muscle development. During early development, inhibits myoblasts differentiation from the medial dermomyotomal lip and later regulates progenitor cell differentiation. Directly modulates cell adhesion and basal lamina formation in satellite cells through Notch signaling. Maintains myogenic progenitors pool by suppressing differentiation through down-regulation of MYOD1 and is required for satellite cell homing and PAX7 expression. During craniofacial and trunk myogenesis suppresses differentiation of cranial mesoderm-derived and somite-derived muscle via MYOD1 regulation but in cranial mesoderm-derived progenitors, is neither required for satellite cell homing nor for PAX7 expression. Also plays a role during pancreatic cell development. During type B pancreatic cell development, may be involved in the initiation of proximodistal patterning in the early pancreatic epithelium. Stimulates multipotent pancreatic progenitor cells proliferation and pancreatic growth by maintaining HES1 expression and PTF1A protein levels. During fetal stages of development, is required to maintain arterial identity and the responsiveness of arterial endothelial cells for VEGFA through regulation of KDR activation and NRP1 expression. Controls sprouting angiogenesis and subsequent vertical branch formation through regulation on tip cell differentiation. Negatively regulates goblet cell differentiation in intestine and controls secretory fat commitment through lateral inhibition in small intestine. Plays a role during inner ear development; negatively regulates auditory hair cell differentiation. Plays a role during nephron development through Notch signaling pathway. Regulates growth, blood pressure and energy homeostasis. In Mus musculus (Mouse), this protein is Delta-like protein 1 (Dll1).